The sequence spans 324 residues: FCS-Like Zinc finger 11 (324 aa).

An FLZ-type zinc finger spans residues 266–309; the sequence is NFLGICNFCNKKLGGGDDIYMYREKSFCSEECRSEEMMIDEEDL.

This sequence belongs to the FLZ family. Interacts with KIN10 and KIN11 via its FLZ-type zinc finger domain. Forms heterodimer with FLZ2 in vitro.

It localises to the cytoplasm. The protein localises to the nucleus. Functionally, may act as an adapter to facilitate the interaction of SnRK1 complex with effector proteins, conferring tissue- and stimulus-type specific differences in the SnRK1 regulation pathway. This chain is FCS-Like Zinc finger 11, found in Arabidopsis thaliana (Mouse-ear cress).